Here is a 195-residue protein sequence, read N- to C-terminus: Protein hunchback (195 aa).

3 disordered regions span residues 16–57, 64–83, and 155–195; these read SHHH…SHTN, LKQQQQQQQQHQHQQQQQPM, and LTPP…KYMA. The segment covering 17–29 has biased composition (basic residues); sequence HHHHHHHAHHSHH. 2 stretches are compositionally biased toward low complexity: residues 33-44 and 66-81; these read SNSNSNASSPHQ and QQQQQQQQHQHQQQQQ. A compositionally biased stretch (basic and acidic residues) spans 176–195; it reads EPEKEHDLMSNSSEDMKYMA.

The protein belongs to the hunchback C2H2-type zinc-finger protein family.

The protein localises to the nucleus. Its function is as follows. Gap class segmentation protein that controls development of head structures. In Drosophila dasycnemia (Fruit fly), this protein is Protein hunchback (hb).